A 223-amino-acid chain; its full sequence is N-acetylmuramate alpha-1-phosphate uridylyltransferase (223 aa).

UTP contacts are provided by residues 11–13 and Lys23; that span reads GER. Asn105 contacts substrate. Asp107 is a Mg(2+) binding site. Substrate-binding residues include Asp140 and Asp205. Asp205 serves as a coordination point for Mg(2+).

The protein belongs to the nucleotidyltransferase MurU family. Monomer. Mg(2+) is required as a cofactor.

It carries out the reaction N-acetyl-alpha-D-muramate 1-phosphate + UDP + H(+) = UDP-N-acetyl-alpha-D-muramate + phosphate. It functions in the pathway cell wall biogenesis; peptidoglycan recycling. Is completely inhibited by EDTA in vitro. In terms of biological role, catalyzes the formation of UDP-N-acetylmuramate (UDP-MurNAc), a crucial precursor of the bacterial peptidoglycan cell wall, from UTP and MurNAc-alpha-1P. Is involved in peptidoglycan recycling as part of a cell wall recycling pathway that bypasses de novo biosynthesis of the peptidoglycan precursor UDP-MurNAc. Plays a role in intrinsic resistance to fosfomycin, which targets the de novo synthesis of UDP-MurNAc. Is not able to use GlcNAc-alpha-1P and GalNAc-alpha-1P as substrates. Cannot accept other nucleotide triphosphates (ATP, CTP, TTP, or GTP) than UTP. This is N-acetylmuramate alpha-1-phosphate uridylyltransferase from Pseudomonas putida (strain ATCC 47054 / DSM 6125 / CFBP 8728 / NCIMB 11950 / KT2440).